A 382-amino-acid chain; its full sequence is Pyrimidine monooxygenase RutA (382 aa).

Residues 68–69, Asn-134, Glu-143, 159–160, and Ser-209 contribute to the FMN site; these read IK and RY.

It belongs to the NtaA/SnaA/DszA monooxygenase family. RutA subfamily.

It carries out the reaction uracil + FMNH2 + NADH + O2 = (Z)-3-ureidoacrylate + FMN + NAD(+) + H2O + H(+). It catalyses the reaction thymine + FMNH2 + NADH + O2 = (Z)-2-methylureidoacrylate + FMN + NAD(+) + H2O + H(+). Its function is as follows. Catalyzes the pyrimidine ring opening between N-3 and C-4 by an unusual flavin hydroperoxide-catalyzed mechanism, adding oxygen atoms in the process to yield ureidoacrylate peracid, that immediately reacts with FMN forming ureidoacrylate and FMN-N(5)-oxide. The FMN-N(5)-oxide reacts spontaneously with NADH to produce FMN. Requires the flavin reductase RutF to regenerate FMN in vivo. The sequence is that of Pyrimidine monooxygenase RutA from Escherichia coli O45:K1 (strain S88 / ExPEC).